Reading from the N-terminus, the 2326-residue chain is Nonribosomal peptide synthetase inpB (2326 aa).

The Carrier 1 domain maps to 8–84 (SPSEWLQLEL…SLYSMAQGPA (77 aa)). S45 carries the O-(pantetheine 4'-phosphoryl)serine modification. Positions 87 to 121 (ASSSTSDNASDKDSSLDDSETGALTPTTDAGSSLA) are disordered. The segment covering 108–121 (GALTPTTDAGSSLA) has biased composition (polar residues). Positions 144–568 (QAVVPCSAIQ…LLSPGEVSQL (425 aa)) are condensation 1. The interval 593-997 (LQPGAAAVNS…GRRDTQVKIR (405 aa)) is adenylation 1. Positions 1145–1221 (EPSTETEFKL…DLARAVESRV (77 aa)) constitute a Carrier 2 domain. Position 1182 is an O-(pantetheine 4'-phosphoryl)serine (S1182). The tract at residues 1226–1247 (DEEDPAPFSVWRESRGSEPSEE) is disordered. Residues 1266–1680 (EDVLPCTALQ…LLSPEDVNQL (415 aa)) form a condensation 2 region. Residues 1702–2097 (EVARSRPGAA…GRIDTQIKIR (396 aa)) form an adenylation 2 region. In terms of domain architecture, Carrier 3 spans 2216-2294 (PPSTEMEKAL…DLAVLLEKRP (79 aa)). Position 2253 is an O-(pantetheine 4'-phosphoryl)serine (S2253).

The protein belongs to the NRP synthetase family.

Its pathway is secondary metabolite biosynthesis. Functionally, nonribosomal peptide synthetase; part of the inp gene cluster that mediates the biosynthesis of fellutamide B, a mycotoxin that acts as a proteasome inhibitor. In the first step of fellutabmide B biosynthesis inpC activates 3-hydroxydodecanoic acid to generate 3-hydroxydodecanoyl-AMP that is then loaded onto the T0 domain of inpB. The 3-hydroxydodecanoyl-S-phosphopantetheinyl-T0 is sequentially extended with L-Asn and L-Gln by the two CAT modules of inpB. The linear lipodipeptide from inpB is then transferred onto inpA for the addition of the third amino acid, L-Leu. Reductive releasing of the lipotripeptide by the TE domain of inpA produces (2S)-fellutamide B. InpF might be involved in the release and transfer of the lipodipeptide from inpB to inpA. The inp cluster-encoded proteasome subunit inpE confers resistance to internally produced fellutamides. The MFS efflux transporter inpD may contribute to fellutamide resistance as well. This chain is Nonribosomal peptide synthetase inpB, found in Emericella nidulans (strain FGSC A4 / ATCC 38163 / CBS 112.46 / NRRL 194 / M139) (Aspergillus nidulans).